We begin with the raw amino-acid sequence, 117 residues long: Large ribosomal subunit protein bL19 (117 aa).

It belongs to the bacterial ribosomal protein bL19 family.

This protein is located at the 30S-50S ribosomal subunit interface and may play a role in the structure and function of the aminoacyl-tRNA binding site. This is Large ribosomal subunit protein bL19 from Vesicomyosocius okutanii subsp. Calyptogena okutanii (strain HA).